We begin with the raw amino-acid sequence, 490 residues long: Katanin p60 ATPase-containing subunit A-like 1 (490 aa).

M1 is modified (N-acetylmethionine). Positions D95–A184 are disordered. Over residues P116–M127 the composition is skewed to basic and acidic residues. Residues A128–A139 are compositionally biased toward low complexity. The span at S143–M169 shows a compositional bias: basic and acidic residues. Position 174 is a phosphoserine (S174). G248–T255 contributes to the ATP binding site.

The protein belongs to the AAA ATPase family. Katanin p60 subunit A1 subfamily. A-like 1 sub-subfamily. Interacts with KATNB1 and KATNBL1.

The protein resides in the cytoplasm. It is found in the cytoskeleton. The protein localises to the spindle pole. It localises to the spindle. It catalyses the reaction n ATP + n H2O + a microtubule = n ADP + n phosphate + (n+1) alpha/beta tubulin heterodimers.. In terms of biological role, regulates microtubule dynamics in Sertoli cells, a process that is essential for spermiogenesis and male fertility. Severs microtubules in an ATP-dependent manner, promoting rapid reorganization of cellular microtubule arrays. Has microtubule-severing activity in vitro. This chain is Katanin p60 ATPase-containing subunit A-like 1, found in Papio anubis (Olive baboon).